Reading from the N-terminus, the 153-residue chain is Aspartate carbamoyltransferase regulatory chain (153 aa).

Zn(2+) is bound by residues Cys-109, Cys-114, Cys-135, and Cys-138.

This sequence belongs to the PyrI family. Contains catalytic and regulatory chains. Zn(2+) is required as a cofactor.

Involved in allosteric regulation of aspartate carbamoyltransferase. The polypeptide is Aspartate carbamoyltransferase regulatory chain (Natronomonas pharaonis (strain ATCC 35678 / DSM 2160 / CIP 103997 / JCM 8858 / NBRC 14720 / NCIMB 2260 / Gabara) (Halobacterium pharaonis)).